The following is a 207-amino-acid chain: Ribosomal RNA small subunit methyltransferase G (207 aa).

S-adenosyl-L-methionine-binding positions include Gly76, Gln81, 127–128 (VE), and Arg141.

The protein belongs to the methyltransferase superfamily. RNA methyltransferase RsmG family.

The protein resides in the cytoplasm. The enzyme catalyses guanosine(527) in 16S rRNA + S-adenosyl-L-methionine = N(7)-methylguanosine(527) in 16S rRNA + S-adenosyl-L-homocysteine. Functionally, specifically methylates the N7 position of guanine in position 527 of 16S rRNA. The chain is Ribosomal RNA small subunit methyltransferase G from Neisseria meningitidis serogroup C / serotype 2a (strain ATCC 700532 / DSM 15464 / FAM18).